The sequence spans 333 residues: MQISVNEFLTPRHIDVQVVSPTRAKITLEPLERGFGHTLGNALRRILLSSMPGCAVVEAEIDGVLHEYSAIEGVQEDVIEILLNLKGLAIKLHGRDEVTLTLSKKGSGVVTAADIQLDHDVEIVNPDHVIANLASNGVLNMKLTVARGRGYEPADSRQSDEDESRSIGRLQLDSSFSPVRRIAYVVENARVEQRTNLDKLVIDLETNGTLDPEEAIRRAATILQQQLAAFVDLKGDSEPVVIEQEDEIDPILLRPVDDLELTVRSANCLKAENIYYIGDLIQRTEVELLKTPNLGKKSLTEIKDVLASRGLSLGMRLDNWPPASLKKDDKATA.

The segment at 1–234 is alpha N-terminal domain (alpha-NTD); that stretch reads MQISVNEFLT…QQLAAFVDLK (234 aa). Residues 248–333 form an alpha C-terminal domain (alpha-CTD) region; that stretch reads IDPILLRPVD…SLKKDDKATA (86 aa).

Belongs to the RNA polymerase alpha chain family. Homodimer. The RNAP catalytic core consists of 2 alpha, 1 beta, 1 beta' and 1 omega subunit. When a sigma factor is associated with the core the holoenzyme is formed, which can initiate transcription.

It catalyses the reaction RNA(n) + a ribonucleoside 5'-triphosphate = RNA(n+1) + diphosphate. Its function is as follows. DNA-dependent RNA polymerase catalyzes the transcription of DNA into RNA using the four ribonucleoside triphosphates as substrates. The polypeptide is DNA-directed RNA polymerase subunit alpha (Pseudomonas syringae pv. tomato (strain ATCC BAA-871 / DC3000)).